Reading from the N-terminus, the 456-residue chain is Ezy-1 protein (456 aa).

The N-terminal stretch at 1–28 is a signal peptide; the sequence is MQLSSSLRSARSAAASSGCALASRPVVA. Disordered regions lie at residues 167-189, 273-310, and 414-456; these read SDGG…DGDG, FTGK…GGSG, and QPAG…SPNM. The span at 281 to 293 shows a compositional bias: acidic residues; it reads AEGDDGEDEEEGE. The span at 418 to 428 shows a compositional bias: basic and acidic residues; it reads DGHEPEPKRPE.

In Chlamydomonas reinhardtii (Chlamydomonas smithii), this protein is Ezy-1 protein (Ezy-1).